A 349-amino-acid chain; its full sequence is Macrophage-capping protein (349 aa).

At methionine 1 the chain carries N-acetylmethionine. Gelsolin-like repeat units follow at residues 28–107 (KLKP…DLFM), 147–222 (KNIR…AEMI), and 264–342 (LTKV…PIFK). Residues 138–147 (RKLYQVKGKK) carry the Nuclear localization signal motif. Serine 338 is modified (phosphoserine).

This sequence belongs to the villin/gelsolin family. In terms of assembly, interacts with NUP62. Interacts with NUTF2 and RAN; involved in CAPG nuclear import. In terms of processing, phosphorylated.

The protein localises to the nucleus. It is found in the cytoplasm. Its subcellular location is the melanosome. The protein resides in the cell projection. It localises to the lamellipodium. The protein localises to the ruffle. Functionally, calcium-sensitive protein which reversibly blocks the barbed ends of actin filaments but does not sever preformed actin filaments. May play an important role in macrophage function. May play a role in regulating cytoplasmic and/or nuclear structures through potential interactions with actin. May bind DNA. Uncapping occurs either when Ca(2+) falls or when the concentration of polyphosphoinositide rises, both at low and high Ca(2+). The polypeptide is Macrophage-capping protein (Capg) (Rattus norvegicus (Rat)).